Reading from the N-terminus, the 338-residue chain is tRNA-cytidine(32) 2-sulfurtransferase (338 aa).

The short motif at 86–91 (SGGKDS) is the PP-loop motif element. [4Fe-4S] cluster is bound by residues Cys-161, Cys-164, and Cys-252.

Belongs to the TtcA family. Homodimer. It depends on Mg(2+) as a cofactor. [4Fe-4S] cluster serves as cofactor.

It localises to the cytoplasm. The catalysed reaction is cytidine(32) in tRNA + S-sulfanyl-L-cysteinyl-[cysteine desulfurase] + AH2 + ATP = 2-thiocytidine(32) in tRNA + L-cysteinyl-[cysteine desulfurase] + A + AMP + diphosphate + H(+). The protein operates within tRNA modification. In terms of biological role, catalyzes the ATP-dependent 2-thiolation of cytidine in position 32 of tRNA, to form 2-thiocytidine (s(2)C32). The sulfur atoms are provided by the cysteine/cysteine desulfurase (IscS) system. The chain is tRNA-cytidine(32) 2-sulfurtransferase from Albidiferax ferrireducens (strain ATCC BAA-621 / DSM 15236 / T118) (Rhodoferax ferrireducens).